The following is an 869-amino-acid chain: Serendipity locus protein H-1 (869 aa).

Positions 1 to 17 (MEGGKGEGKRMKEEAPS) are enriched in basic and acidic residues. 2 disordered regions span residues 1–32 (MEGG…AGTP) and 134–165 (FSVT…TPVK). Residues 146–164 (AFTNSPFKKTSSSGTSTPV) show a composition bias toward polar residues. C2H2-type zinc fingers lie at residues 269–293 (HKCL…AAAH), 299–321 (YRCS…LKTH), 331–352 (KKCP…RKIH), 358–380 (YQCD…ARIH), 386–408 (YECP…QKYH), 414–436 (YRCE…NLVH), 442–464 (FACT…SNIH), and 470–493 (FKCN…RRRH). Disordered stretches follow at residues 554–573 (TSTA…QPQQ) and 617–652 (PKQT…SSLE). The span at 630–648 (APKQLQQKPQLLQQGQPQQ) shows a compositional bias: low complexity.

In terms of tissue distribution, distribution varies between nurse cells and the oocyte during oogenesis. Weakly expressed in follicle and border cells.

The protein resides in the nucleus. May belong to a complex set of multifingered proteins which play an important role in gene activation or regulation at early embryonic stages through a maximal accumulation of their transcripts (or protein product) in the mature oocyte. This chain is Serendipity locus protein H-1 (wdn), found in Drosophila melanogaster (Fruit fly).